The primary structure comprises 316 residues: Phosphatidylinositol mannoside acyltransferase (316 aa).

The active-site Proton acceptor is the His137. The hexadecanoyl-CoA site is built by His137 and Arg175. Residue Glu211 is part of the active site. Glu240 lines the hexadecanoyl-CoA pocket.

Belongs to the LpxL/LpxM/LpxP family.

The protein resides in the cell inner membrane. It catalyses the reaction a 2,6-O-bis(alpha-D-mannopyranosyl)-1-phosphatidyl-1D-myo-inositol + an acyl-CoA = a 2-O-(alpha-D-mannosyl)-6-O-(6-O-acyl-alpha-D-mannosyl)-1-phosphatidyl-1D-myo-inositol + CoA. The enzyme catalyses a 1,2-diacyl-sn-glycero-3-phospho-[alpha-D-mannopyranosyl-(1&lt;-&gt;6)-D-myo-inositol] + an acyl-CoA = a 1,2-diacyl-sn-glycero-3-phospho-[alpha-D-6-acyl-mannopyranosyl-(1&lt;-&gt;6)-D-myo-inositol] + CoA. The protein operates within phospholipid metabolism; phosphatidylinositol metabolism. Catalyzes the transfer of a palmitoyl moiety from palmitoyl-CoA to the 6-position of the mannose ring linked to the 2-position of myo-inositol in phosphatidyl-myo-inositol monomannoside (PIM1) or dimannoside (PIM2). Essential for growth and survival in axenic cultures and during macrophage infection and in a mouse model of infection. This Mycobacterium tuberculosis (strain ATCC 25618 / H37Rv) protein is Phosphatidylinositol mannoside acyltransferase.